We begin with the raw amino-acid sequence, 589 residues long: Formate--tetrahydrofolate ligase (589 aa).

An ATP-binding site is contributed by 74–81 (TPFGEGKS).

Belongs to the formate--tetrahydrofolate ligase family.

The catalysed reaction is (6S)-5,6,7,8-tetrahydrofolate + formate + ATP = (6R)-10-formyltetrahydrofolate + ADP + phosphate. The protein operates within one-carbon metabolism; tetrahydrofolate interconversion. The polypeptide is Formate--tetrahydrofolate ligase (Thermodesulfovibrio yellowstonii (strain ATCC 51303 / DSM 11347 / YP87)).